A 304-amino-acid chain; its full sequence is Coenzyme PQQ synthesis protein B (304 aa).

The protein belongs to the PqqB family.

It participates in cofactor biosynthesis; pyrroloquinoline quinone biosynthesis. Its function is as follows. May be involved in the transport of PQQ or its precursor to the periplasm. The polypeptide is Coenzyme PQQ synthesis protein B (Pseudomonas aeruginosa (strain LESB58)).